Reading from the N-terminus, the 494-residue chain is Aspartyl/glutamyl-tRNA(Asn/Gln) amidotransferase subunit B (494 aa).

The protein belongs to the GatB/GatE family. GatB subfamily. In terms of assembly, heterotrimer of A, B and C subunits.

It carries out the reaction L-glutamyl-tRNA(Gln) + L-glutamine + ATP + H2O = L-glutaminyl-tRNA(Gln) + L-glutamate + ADP + phosphate + H(+). The enzyme catalyses L-aspartyl-tRNA(Asn) + L-glutamine + ATP + H2O = L-asparaginyl-tRNA(Asn) + L-glutamate + ADP + phosphate + 2 H(+). In terms of biological role, allows the formation of correctly charged Asn-tRNA(Asn) or Gln-tRNA(Gln) through the transamidation of misacylated Asp-tRNA(Asn) or Glu-tRNA(Gln) in organisms which lack either or both of asparaginyl-tRNA or glutaminyl-tRNA synthetases. The reaction takes place in the presence of glutamine and ATP through an activated phospho-Asp-tRNA(Asn) or phospho-Glu-tRNA(Gln). The protein is Aspartyl/glutamyl-tRNA(Asn/Gln) amidotransferase subunit B of Synechococcus sp. (strain ATCC 27144 / PCC 6301 / SAUG 1402/1) (Anacystis nidulans).